A 531-amino-acid polypeptide reads, in one-letter code: Peptide chain release factor 3 (531 aa).

The 269-residue stretch at 10 to 278 (RRRRTFAIIS…SLIEWAPAPK (269 aa)) folds into the tr-type G domain. GTP-binding positions include 19-26 (SHPDAGKT), 87-91 (DTPGH), and 141-144 (NKYD).

This sequence belongs to the TRAFAC class translation factor GTPase superfamily. Classic translation factor GTPase family. PrfC subfamily.

Its subcellular location is the cytoplasm. Its function is as follows. Increases the formation of ribosomal termination complexes and stimulates activities of RF-1 and RF-2. It binds guanine nucleotides and has strong preference for UGA stop codons. It may interact directly with the ribosome. The stimulation of RF-1 and RF-2 is significantly reduced by GTP and GDP, but not by GMP. The protein is Peptide chain release factor 3 of Neisseria meningitidis serogroup A / serotype 4A (strain DSM 15465 / Z2491).